Here is a 185-residue protein sequence, read N- to C-terminus: Adenylyl-sulfate kinase (185 aa).

Residue 13–20 coordinates ATP; sequence GLSGAGKT. Serine 87 acts as the Phosphoserine intermediate in catalysis.

This sequence belongs to the APS kinase family.

It catalyses the reaction adenosine 5'-phosphosulfate + ATP = 3'-phosphoadenylyl sulfate + ADP + H(+). It participates in sulfur metabolism; hydrogen sulfide biosynthesis; sulfite from sulfate: step 2/3. Its function is as follows. Catalyzes the synthesis of activated sulfate. The sequence is that of Adenylyl-sulfate kinase from Halothermothrix orenii (strain H 168 / OCM 544 / DSM 9562).